The primary structure comprises 29 residues: Amelogenin-like protein (29 aa).

Ser16 is modified (phosphoserine).

This sequence belongs to the amelogenin family.

The protein resides in the secreted. It is found in the extracellular space. It localises to the extracellular matrix. Functionally, tooth enamel proteins are produced in ameloblasts and play a role in biomineralization. This is Amelogenin-like protein (AMEL) from Oryctolagus cuniculus (Rabbit).